The following is an 818-amino-acid chain: Probable helicase MAGATAMA 3 (818 aa).

The 301-residue stretch at 259-559 (NKSQKEAIDV…KMLKTQYRMH (301 aa)) folds into the UvrD-like helicase ATP-binding domain. Position 280–287 (280–287 (GPPGTGKT)) interacts with ATP. 2 stretches are compositionally biased toward acidic residues: residues 781 to 790 (PDAPLYEDES) and 798 to 818 (GDDD…AGED). The disordered stretch occupies residues 781-818 (PDAPLYEDESLPVAPYGGDDDFGDGDADQDDVAMAGED).

Belongs to the helicase family. In terms of tissue distribution, expressed in flowers, siliques, leaves, roots and shoot apex.

The protein resides in the nucleus. In terms of biological role, probable helicase that may regulate RNA molecules involved in nucleolar organization and pollen tube guidance. This is Probable helicase MAGATAMA 3 (MAA3) from Arabidopsis thaliana (Mouse-ear cress).